The primary structure comprises 169 residues: 16S rRNA aminocarboxypropyltransferase (169 aa).

T15, V65, L88, and T107 together coordinate S-adenosyl-L-methionine.

Belongs to the TDD superfamily. TSR3 family.

Its subcellular location is the cytoplasm. It carries out the reaction an N(1)-methylpseudouridine in rRNA + S-adenosyl-L-methionine = N(1)-methyl-N(3)-[(3S)-3-amino-3-carboxypropyl]pseudouridine in rRNA + S-methyl-5'-thioadenosine + H(+). Functionally, aminocarboxypropyltransferase that catalyzes the aminocarboxypropyl transfer on pseudouridine corresponding to position 914 in M.jannaschii 16S rRNA. It constitutes the last step in biosynthesis of the hypermodified N1-methyl-N3-(3-amino-3-carboxypropyl) pseudouridine (m1acp3-Psi). The polypeptide is 16S rRNA aminocarboxypropyltransferase (Methanopyrus kandleri (strain AV19 / DSM 6324 / JCM 9639 / NBRC 100938)).